We begin with the raw amino-acid sequence, 434 residues long: Gamma-glutamyl phosphate reductase (434 aa).

This sequence belongs to the gamma-glutamyl phosphate reductase family.

It localises to the cytoplasm. The catalysed reaction is L-glutamate 5-semialdehyde + phosphate + NADP(+) = L-glutamyl 5-phosphate + NADPH + H(+). It participates in amino-acid biosynthesis; L-proline biosynthesis; L-glutamate 5-semialdehyde from L-glutamate: step 2/2. Catalyzes the NADPH-dependent reduction of L-glutamate 5-phosphate into L-glutamate 5-semialdehyde and phosphate. The product spontaneously undergoes cyclization to form 1-pyrroline-5-carboxylate. This is Gamma-glutamyl phosphate reductase from Pelotomaculum thermopropionicum (strain DSM 13744 / JCM 10971 / SI).